A 339-amino-acid polypeptide reads, in one-letter code: Anthranilate phosphoribosyltransferase (339 aa).

Residues glycine 80, 83–84 (GD), threonine 88, 90–93 (NIST), 108–116 (KHGNRSVSS), and serine 120 contribute to the 5-phospho-alpha-D-ribose 1-diphosphate site. Position 80 (glycine 80) interacts with anthranilate. Residue serine 92 coordinates Mg(2+). Residue asparagine 111 participates in anthranilate binding. Position 166 (arginine 166) interacts with anthranilate. Positions 225 and 226 each coordinate Mg(2+).

Belongs to the anthranilate phosphoribosyltransferase family. As to quaternary structure, homodimer. Mg(2+) is required as a cofactor.

It catalyses the reaction N-(5-phospho-beta-D-ribosyl)anthranilate + diphosphate = 5-phospho-alpha-D-ribose 1-diphosphate + anthranilate. It participates in amino-acid biosynthesis; L-tryptophan biosynthesis; L-tryptophan from chorismate: step 2/5. Catalyzes the transfer of the phosphoribosyl group of 5-phosphorylribose-1-pyrophosphate (PRPP) to anthranilate to yield N-(5'-phosphoribosyl)-anthranilate (PRA). The protein is Anthranilate phosphoribosyltransferase of Desulfosudis oleivorans (strain DSM 6200 / JCM 39069 / Hxd3) (Desulfococcus oleovorans).